Here is a 264-residue protein sequence, read N- to C-terminus: Thymidylate synthase (264 aa).

Arginine 21 is a binding site for dUMP. Histidine 51 provides a ligand contact to (6R)-5,10-methylene-5,6,7,8-tetrahydrofolate. Position 126–127 (126–127 (RR)) interacts with dUMP. The active-site Nucleophile is cysteine 146. DUMP is bound by residues 166 to 169 (RSAD), asparagine 177, and 207 to 209 (HIY). Aspartate 169 is a binding site for (6R)-5,10-methylene-5,6,7,8-tetrahydrofolate. Alanine 263 is a (6R)-5,10-methylene-5,6,7,8-tetrahydrofolate binding site.

This sequence belongs to the thymidylate synthase family. Bacterial-type ThyA subfamily. Homodimer.

It is found in the cytoplasm. The catalysed reaction is dUMP + (6R)-5,10-methylene-5,6,7,8-tetrahydrofolate = 7,8-dihydrofolate + dTMP. The protein operates within pyrimidine metabolism; dTTP biosynthesis. In terms of biological role, catalyzes the reductive methylation of 2'-deoxyuridine-5'-monophosphate (dUMP) to 2'-deoxythymidine-5'-monophosphate (dTMP) while utilizing 5,10-methylenetetrahydrofolate (mTHF) as the methyl donor and reductant in the reaction, yielding dihydrofolate (DHF) as a by-product. This enzymatic reaction provides an intracellular de novo source of dTMP, an essential precursor for DNA biosynthesis. The protein is Thymidylate synthase of Methylobacillus flagellatus (strain ATCC 51484 / DSM 6875 / VKM B-1610 / KT).